The primary structure comprises 133 residues: Small ribosomal subunit protein uS11 (133 aa).

The protein belongs to the universal ribosomal protein uS11 family. As to quaternary structure, part of the 30S ribosomal subunit. Interacts with proteins S7 and S18. Binds to IF-3.

Its function is as follows. Located on the platform of the 30S subunit, it bridges several disparate RNA helices of the 16S rRNA. Forms part of the Shine-Dalgarno cleft in the 70S ribosome. The sequence is that of Small ribosomal subunit protein uS11 from Methylibium petroleiphilum (strain ATCC BAA-1232 / LMG 22953 / PM1).